A 1106-amino-acid polypeptide reads, in one-letter code: Communication mutant protein F (1106 aa).

The N-terminal stretch at 1–28 is a signal peptide; sequence MKIYKKNHFLKILIIFIYLSCNILKVNA. The G8 domain maps to 254 to 380; sequence TIWPNGVVPS…YHNTWSKLAS (127 aa). N267, N306, N512, N536, N677, N715, and N833 each carry an N-linked (GlcNAc...) asparagine glycan.

This sequence belongs to the comF family.

It localises to the secreted. In Dictyostelium discoideum (Social amoeba), this protein is Communication mutant protein F (comF-1).